A 258-amino-acid polypeptide reads, in one-letter code: Phosphosulfolactate synthase (258 aa).

It belongs to the phosphosulfolactate synthase family.

The enzyme catalyses (2R)-O-phospho-3-sulfolactate = phosphoenolpyruvate + sulfite + H(+). It functions in the pathway cofactor biosynthesis; coenzyme M biosynthesis; sulfoacetaldehyde from phosphoenolpyruvate and sulfite: step 1/4. Functionally, catalyzes the addition of sulfite to phosphoenolpyruvate (PEP) to yield (2R)-phospho-3-sulfolactate (PSL). This chain is Phosphosulfolactate synthase (comA), found in Methanothermobacter thermautotrophicus (strain ATCC 29096 / DSM 1053 / JCM 10044 / NBRC 100330 / Delta H) (Methanobacterium thermoautotrophicum).